The primary structure comprises 185 residues: Sulfopyruvate decarboxylase subunit beta (185 aa).

It belongs to the TPP enzyme family. In terms of assembly, heterododecamer composed of 6 subunits alpha and 6 subunits beta. The cofactor is thiamine diphosphate.

It catalyses the reaction 3-sulfopyruvate + H(+) = sulfoacetaldehyde + CO2. Its pathway is cofactor biosynthesis; coenzyme M biosynthesis; sulfoacetaldehyde from phosphoenolpyruvate and sulfite: step 4/4. In terms of biological role, involved in the biosynthesis of the coenzyme M (2-mercaptoethanesulfonic acid). Catalyzes the decarboxylation of sulfopyruvate to sulfoacetaldehyde. In Methanococcus maripaludis (strain DSM 14266 / JCM 13030 / NBRC 101832 / S2 / LL), this protein is Sulfopyruvate decarboxylase subunit beta.